Reading from the N-terminus, the 364-residue chain is UDP-N-acetylglucosamine--N-acetylmuramyl-(pentapeptide) pyrophosphoryl-undecaprenol N-acetylglucosamine transferase (364 aa).

Residues 10–12, N123, S198, I251, and Q296 contribute to the UDP-N-acetyl-alpha-D-glucosamine site; that span reads TGG.

This sequence belongs to the glycosyltransferase 28 family. MurG subfamily.

The protein localises to the cell membrane. The enzyme catalyses di-trans,octa-cis-undecaprenyl diphospho-N-acetyl-alpha-D-muramoyl-L-alanyl-D-glutamyl-meso-2,6-diaminopimeloyl-D-alanyl-D-alanine + UDP-N-acetyl-alpha-D-glucosamine = di-trans,octa-cis-undecaprenyl diphospho-[N-acetyl-alpha-D-glucosaminyl-(1-&gt;4)]-N-acetyl-alpha-D-muramoyl-L-alanyl-D-glutamyl-meso-2,6-diaminopimeloyl-D-alanyl-D-alanine + UDP + H(+). Its pathway is cell wall biogenesis; peptidoglycan biosynthesis. In terms of biological role, cell wall formation. Catalyzes the transfer of a GlcNAc subunit on undecaprenyl-pyrophosphoryl-MurNAc-pentapeptide (lipid intermediate I) to form undecaprenyl-pyrophosphoryl-MurNAc-(pentapeptide)GlcNAc (lipid intermediate II). This chain is UDP-N-acetylglucosamine--N-acetylmuramyl-(pentapeptide) pyrophosphoryl-undecaprenol N-acetylglucosamine transferase, found in Exiguobacterium sibiricum (strain DSM 17290 / CCUG 55495 / CIP 109462 / JCM 13490 / 255-15).